A 328-amino-acid polypeptide reads, in one-letter code: dITP/XTP pyrophosphatase (328 aa).

The unknown stretch occupies residues 1–129; that stretch reads MSEKIYEYKD…ATSEQGFGDI (129 aa). The tract at residues 130–324 is NTP pyrophosphatase; sequence ILIATRNEGK…KLMEVFPAWQ (195 aa). 134–139 contacts substrate; it reads TRNEGK. Asp-196 functions as the Proton acceptor in the catalytic mechanism. Asp-196 is a Mg(2+) binding site. Residues Ser-197, 280-283, Lys-303, and 308-309 each bind substrate; these read FGYD and HR.

The protein belongs to the HAM1 NTPase family. In terms of assembly, homodimer. Mg(2+) serves as cofactor.

The enzyme catalyses XTP + H2O = XMP + diphosphate + H(+). It carries out the reaction dITP + H2O = dIMP + diphosphate + H(+). It catalyses the reaction ITP + H2O = IMP + diphosphate + H(+). In terms of biological role, pyrophosphatase that catalyzes the hydrolysis of nucleoside triphosphates to their monophosphate derivatives, with a high preference for the non-canonical purine nucleotides XTP (xanthosine triphosphate), dITP (deoxyinosine triphosphate) and ITP. Seems to function as a house-cleaning enzyme that removes non-canonical purine nucleotides from the nucleotide pool, thus preventing their incorporation into DNA/RNA and avoiding chromosomal lesions. The sequence is that of dITP/XTP pyrophosphatase from Streptococcus pyogenes serotype M3 (strain ATCC BAA-595 / MGAS315).